The sequence spans 182 residues: Large ribosomal subunit protein uL10 (182 aa).

Belongs to the universal ribosomal protein uL10 family. Part of the ribosomal stalk of the 50S ribosomal subunit. The N-terminus interacts with L11 and the large rRNA to form the base of the stalk. The C-terminus forms an elongated spine to which L12 dimers bind in a sequential fashion forming a multimeric L10(L12)X complex.

Its function is as follows. Forms part of the ribosomal stalk, playing a central role in the interaction of the ribosome with GTP-bound translation factors. This chain is Large ribosomal subunit protein uL10, found in Parafrankia sp. (strain EAN1pec).